Consider the following 446-residue polypeptide: MITIKKGLDLPIAGTPSQVINDGKSITKVALLGEEYVGMRPTMHARVGDEVKKGQVLFADKKNPGVVFTSPASGKVIEVNRGAKRVLQSVVIEVAGNEQITFNSYEANQLVSLDRETVKTQLVESGAWTALRTRPFSKVPAVDSETQAIFVTAMDTNPLAAEPELIINEQSDAFVAGLDLLSTLTNGKVYVCKKGTSLPRSAQSNVEEHVFDGPHPAGLAGTHMHYLYPVNAQNVAWSINYQDVIAFGKLFLTGEIYSERVVSLAGPVVNNPRLVRTQIGASLEELTDSELMPGEVRVISGSVLTGTEATGPHAFLGRYHQQVSVLREGRDKELFGWAMPGKNKFSVTRSFLGHLFKGQLFNMTTTTNGSDRSMVPIGNYERVMPLDMEPTLLLRDLCAGDIDSAQALGALELDEEDVALCTFVCPGKYEYGQLLRECLDTIEKEG.

This sequence belongs to the NqrA family. Composed of six subunits; NqrA, NqrB, NqrC, NqrD, NqrE and NqrF.

It catalyses the reaction a ubiquinone + n Na(+)(in) + NADH + H(+) = a ubiquinol + n Na(+)(out) + NAD(+). NQR complex catalyzes the reduction of ubiquinone-1 to ubiquinol by two successive reactions, coupled with the transport of Na(+) ions from the cytoplasm to the periplasm. NqrA to NqrE are probably involved in the second step, the conversion of ubisemiquinone to ubiquinol. This is Na(+)-translocating NADH-quinone reductase subunit A from Vibrio atlanticus (strain LGP32) (Vibrio splendidus (strain Mel32)).